The following is a 309-amino-acid chain: Porphobilinogen deaminase (309 aa).

C241 bears the S-(dipyrrolylmethanemethyl)cysteine mark.

Belongs to the HMBS family. In terms of assembly, monomer. Dipyrromethane is required as a cofactor.

It catalyses the reaction 4 porphobilinogen + H2O = hydroxymethylbilane + 4 NH4(+). Its pathway is porphyrin-containing compound metabolism; protoporphyrin-IX biosynthesis; coproporphyrinogen-III from 5-aminolevulinate: step 2/4. Functionally, tetrapolymerization of the monopyrrole PBG into the hydroxymethylbilane pre-uroporphyrinogen in several discrete steps. The chain is Porphobilinogen deaminase from Bacillus cereus (strain AH187).